The following is a 563-amino-acid chain: MLDFKILEKIPNKSGVYIFKKGEEYIYIGKAKELKKRLTSHFKAKDGKSKLIVEEADDLQVILLDNEKEALILEANMIYKYKPKYNAMLKDTQVYPYIRISNDEIPYLEIVRNRKGEGEFYGPFTNVYFTRQLFEVLRKVYKFRTCKRDITKLKKPCMDYHLGLCSGVCINEESPEDYKKKINEVKNVLKGKFSNVISFIKLKMEQHARLLDFENAAKYRDILLNFNKVMESQGVVLPESVNIDLVVGKHKTFLVFKIRSGYLISKLVYEYDGHIVDFIELFYTQNTSDIPEKIIVEKENKELKNIAKILGIKIAQAKDDLELQLLNKAIDNLNYEIGLILTNKIILKQMKELLGLMKLPNRIEGIDISHLAGKNTVASLVVFENGEIKKEEYRRYKLGDILDDFESIRIVVKKRYTKHNVPDLLFIDGGIGQVNAAYQSLKEIGKERECDVIGLAKEEETIVTLHGEIRLAFDHPVLRLLVKIRDETHRVANEFTRNLSTKKSLRSILDEIKWIGPKRKKTLLERYTSIEEILSVSRSEIEQLIGKKATESLLNELSYRRNL.

A GIY-YIG domain is found at 12 to 87; that stretch reads NKSGVYIFKK…IYKYKPKYNA (76 aa). Residues 194-229 enclose the UVR domain; it reads SNVISFIKLKMEQHARLLDFENAAKYRDILLNFNKV.

This sequence belongs to the UvrC family. Interacts with UvrB in an incision complex.

It localises to the cytoplasm. Its function is as follows. The UvrABC repair system catalyzes the recognition and processing of DNA lesions. UvrC both incises the 5' and 3' sides of the lesion. The N-terminal half is responsible for the 3' incision and the C-terminal half is responsible for the 5' incision. The chain is UvrABC system protein C from Fervidobacterium nodosum (strain ATCC 35602 / DSM 5306 / Rt17-B1).